Consider the following 234-residue polypeptide: 2-amino-5-formylamino-6-ribosylaminopyrimidin-4(3H)-one 5'-monophosphate deformylase (234 aa).

Glu-29, His-31, Asp-40, and His-109 together coordinate Fe cation.

Belongs to the creatininase superfamily. FAPy deformylase family. Homodimer. Fe(2+) serves as cofactor. It depends on Zn(2+) as a cofactor.

It carries out the reaction 2-amino-5-formylamino-6-(5-phospho-D-ribosylamino)pyrimidin-4(3H)-one + H2O = 2,5-diamino-6-(1-D-ribosylamino)pyrimidin-4(3H)-one 5'-phosphate + formate + H(+). The protein operates within cofactor biosynthesis; coenzyme F420 biosynthesis. It participates in cofactor biosynthesis; riboflavin biosynthesis. In terms of biological role, catalyzes the hydrolysis of the formamide of 2-amino-5-formylamino-6-ribosylamino-4(3H)-pyrimidinone 5'-monophosphate (FAPy) to form 2,5-diamino-6-ribosylamino-4(3H)-pyrimidinone 5'-phosphate (APy). The chain is 2-amino-5-formylamino-6-ribosylaminopyrimidin-4(3H)-one 5'-monophosphate deformylase from Methanobrevibacter ruminantium (strain ATCC 35063 / DSM 1093 / JCM 13430 / OCM 146 / M1) (Methanobacterium ruminantium).